The primary structure comprises 640 residues: Tyrosine--tRNA ligase, mitochondrial (640 aa).

Tyr100 contacts L-tyrosine. Asp104 is a binding site for ATP. A 'HIGH' region motif is present at residues Pro105–His114. Residues Asp144, Tyr248, Gln252, Asp255, and Gln274 each coordinate L-tyrosine. Positions Lys322–Ser326 match the 'KMSKS' region motif. Residue Lys325 participates in ATP binding.

It belongs to the class-I aminoacyl-tRNA synthetase family.

Its subcellular location is the mitochondrion matrix. The enzyme catalyses tRNA(Tyr) + L-tyrosine + ATP = L-tyrosyl-tRNA(Tyr) + AMP + diphosphate + H(+). In terms of biological role, has both an aminoacyl-tRNA synthetase activity and is involved in the splicing of group I introns. The polypeptide is Tyrosine--tRNA ligase, mitochondrial (YTS1) (Podospora anserina (Pleurage anserina)).